Reading from the N-terminus, the 78-residue chain is Large ribosomal subunit protein bL28 (78 aa).

It belongs to the bacterial ribosomal protein bL28 family.

This is Large ribosomal subunit protein bL28 from Escherichia coli O139:H28 (strain E24377A / ETEC).